Here is a 91-residue protein sequence, read N- to C-terminus: Alpha-defensin 31 (91 aa).

An N-terminal signal peptide occupies residues 1–19; that stretch reads MKKLVLLFALVLLAFQVQA. A propeptide spanning residues 20–65 is cleaved from the precursor; sequence DSIQNTDEETKTEEQQGEEDQAVSVSFGDPQGSGLQDAALGWGRRC. The segment at 22–55 is disordered; that stretch reads IQNTDEETKTEEQQGEEDQAVSVSFGDPQGSGLQ. Repeat copies occupy residues 65 to 67, 68 to 70, 71 to 73, 77 to 79, 80 to 82, and 83 to 85. The 6 X 3 AA tandem repeats of C-P-X stretch occupies residues 65 to 85; it reads CPRCPPCPRCSWCPRCPTCPR.

Belongs to the alpha-defensin family. Paneth cells of the small bowel.

The protein resides in the secreted. In terms of biological role, apparent precursor of a secreted, cationic, proline- and cysteine-rich peptide that contains Cys-Pro-Xaa repeats. Unlike cryptdin, the proposed mature peptide region lacks the structural motif characteristic of defensins. It may have microbicidal activities. The chain is Alpha-defensin 31 from Mus musculus (Mouse).